A 237-amino-acid chain; its full sequence is Ribosomal RNA small subunit methyltransferase G (237 aa).

Residues Gly-78, Phe-83, 129–130, and Arg-148 each bind S-adenosyl-L-methionine; that span reads AE. The interval 218-237 is disordered; that stretch reads KKETPNKYPRKAGMPNKRPL.

Belongs to the methyltransferase superfamily. RNA methyltransferase RsmG family.

The protein localises to the cytoplasm. In terms of biological role, specifically methylates the N7 position of a guanine in 16S rRNA. The protein is Ribosomal RNA small subunit methyltransferase G of Streptococcus pneumoniae serotype 19F (strain G54).